Consider the following 761-residue polypeptide: Dipeptidyl-peptidase 4 (761 aa).

The N-terminal stretch at 1-15 (MTLSAWIILVTLAMA) is a signal peptide. Residues Ser622, Asp706, and His738 each act as charge relay system in the active site.

The protein belongs to the peptidase S9C family.

The protein resides in the membrane. In terms of biological role, may be involved in metabolism of dipeptides or may affect host defense mechanisms. In Giardia intestinalis (Giardia lamblia), this protein is Dipeptidyl-peptidase 4 (DPP).